A 638-amino-acid chain; its full sequence is Outer dense fiber protein 2 (638 aa).

The residue at position 73 (Thr-73) is a Phosphothreonine. Ser-76 bears the Phosphoserine; by TSSK4 mark. A phosphoserine mark is found at Ser-87 and Ser-90. Thr-91 is modified (phosphothreonine). A phosphoserine mark is found at Ser-96 and Ser-110. A Glycyl lysine isopeptide (Lys-Gly) (interchain with G-Cter in SUMO2) cross-link involves residue Lys-119. Residue Ser-120 is modified to Phosphoserine. A coiled-coil region spans residues Gln-125–Asp-198. Thr-212 is subject to Phosphothreonine. 2 coiled-coil regions span residues Asp-226–Leu-404 and Glu-442–Arg-616. Ser-242 carries the phosphoserine modification. Positions Lys-373–Lys-396 are disordered. At Ser-613 the chain carries Phosphoserine.

It belongs to the ODF2 family. Self-associates. Associates with microtubules and forms a fibrillar structure partially linked to the microtubule network. Interacts via its C-terminus with PLK1. Interacts with ODF1. Localized at the distal/subdistal appendages of mother centrioles. Interacts with MARK4; the interaction is required for localization of ODF2 to centrioles. Interacts with TSSK4. Interacts with AKNA. Interacts with QRICH2. Interacts with CFAP58. Interacts with BBOF1. Interacts with CCDC38. Interacts with CCDC42. Tyrosine phosphorylated. Phosphorylated on Ser-76 by TSSK4.

It localises to the cytoplasm. It is found in the cytoskeleton. Its subcellular location is the microtubule organizing center. The protein resides in the centrosome. The protein localises to the cell projection. It localises to the cilium. It is found in the centriole. Its subcellular location is the spindle pole. The protein resides in the flagellum. Seems to be a major component of sperm tail outer dense fibers (ODF). ODFs are filamentous structures located on the outside of the axoneme in the midpiece and principal piece of the mammalian sperm tail and may help to maintain the passive elastic structures and elastic recoil of the sperm tail. May have a modulating influence on sperm motility. Functions as a general scaffold protein that is specifically localized at the distal/subdistal appendages of mother centrioles. Component of the centrosome matrix required for the localization of PLK1 and NIN to the centrosomes. Required for the formation and/or maintenance of normal CETN1 assembly. The sequence is that of Outer dense fiber protein 2 (ODF2) from Macaca fascicularis (Crab-eating macaque).